A 104-amino-acid polypeptide reads, in one-letter code: uncharacterized protein (104 aa).

This is an uncharacterized protein from Saccharomyces cerevisiae (strain ATCC 204508 / S288c) (Baker's yeast).